Here is a 423-residue protein sequence, read N- to C-terminus: uncharacterized protein (423 aa).

The Mg(2+) site is built by lysine 181, aspartate 183, and glutamate 184. An N6-carboxylysine modification is found at lysine 181.

It belongs to the RuBisCO large chain family. Type IV subfamily. It depends on Mg(2+) as a cofactor.

In terms of biological role, may be involved in sulfur metabolism and oxidative stress response. Does not show RuBisCO activity. This is an uncharacterized protein from Bordetella bronchiseptica (strain ATCC BAA-588 / NCTC 13252 / RB50) (Alcaligenes bronchisepticus).